Reading from the N-terminus, the 69-residue chain is DNA-directed RNA polymerase subunit epsilon (69 aa).

This sequence belongs to the RNA polymerase subunit epsilon family. In terms of assembly, RNAP is composed of a core of 2 alpha, a beta and a beta' subunit. The core is associated with a delta subunit, and at least one of epsilon or omega. When a sigma factor is associated with the core the holoenzyme is formed, which can initiate transcription.

The enzyme catalyses RNA(n) + a ribonucleoside 5'-triphosphate = RNA(n+1) + diphosphate. Functionally, a non-essential component of RNA polymerase (RNAP). The protein is DNA-directed RNA polymerase subunit epsilon of Listeria monocytogenes serotype 4b (strain CLIP80459).